The primary structure comprises 888 residues: Alanine--tRNA ligase (888 aa).

Zn(2+) is bound by residues His573, His577, Cys676, and His680.

The protein belongs to the class-II aminoacyl-tRNA synthetase family. It depends on Zn(2+) as a cofactor.

The protein localises to the cytoplasm. The catalysed reaction is tRNA(Ala) + L-alanine + ATP = L-alanyl-tRNA(Ala) + AMP + diphosphate. Its function is as follows. Catalyzes the attachment of alanine to tRNA(Ala) in a two-step reaction: alanine is first activated by ATP to form Ala-AMP and then transferred to the acceptor end of tRNA(Ala). Also edits incorrectly charged Ser-tRNA(Ala) and Gly-tRNA(Ala) via its editing domain. This Corynebacterium glutamicum (strain ATCC 13032 / DSM 20300 / JCM 1318 / BCRC 11384 / CCUG 27702 / LMG 3730 / NBRC 12168 / NCIMB 10025 / NRRL B-2784 / 534) protein is Alanine--tRNA ligase.